Consider the following 1342-residue polypeptide: MVFSYTEKKRIRKDFGKRPQVLDIPYLLSIQLGSFQKFVKKDPEGQNGLESAFRSVFPIKSYNGNAELRYLDYKLGEPVFDVKECQIRGMTFAAPLRVQLCLVIYERDGSAYNTIKRTQQQEVYMGEIPLMTDNGTFIINGIERVVVSQLHRSPGVFFDSDKGKTHSSGKILYTARIIPYRGSWLDFEFDLKDNLFVRIDRRRKLPVTVLLRALDYTNDQILNTFFNTVVYEFKDDLLFMNLVPERLRGETVSFDIKANDIIYVERGRRITSKHINKLKADNIIKVEVPLNYLMGKVIIKDYLDIKNGELIVAANTEISMDILHNLVKSGFNIIETLFSNDLDYGNYISETLRIDSTVTRFDALVEIYRVMRPGEPPTKEAAEYLFESLFFLEERYDLSDVGRMKFNRSLQRDDISGSGVLTKNDIIDVIKKLIDIRNGKGDVDDIDHLGNRRIRSVGEMAENQFRIGLVRVERAVKERLSLGDLDVLTPQDLINAKPISAAVREFFNSSQLSQFMDQNNPLSEITHKRRISALGPGGLTRERAGFEVRDVHPTHYGRVCPIETPEGPNIGLINSLSVYARTNKYGFLETPYRRVCDGKVSNDIHYLSAIEEGDFIIAQANTNLNKDGQFIDDLITCRNKGESGLFRKDQIDYMDVSTQQIVSVAASLIPFLEHDDANRALMGANMQRQAVPVIRSEKPLVGTGMERSVAVDSGVTVVAKRGGMVKYVDASRIVIHVNVNEISVEEAGIDIYNLKKYVRSNQNTCINQRPCVELGELIKKGDVIADGPSTDLGELALGQNMRIAFMPWNGYNFEDSMLVSERVVQEDRFTSIHIQELSCISRDTKLGPEEITSDIPNIGETALSKLDEVGVVYIGAEVVGGDILVGKITPKGETQLTPEEKLLRAIFGEKASDVKDSSLRVPNGICGTVIDVQIFTRDGIKKDKRALNIELTKLNQIKKDLGEELKIFESALFDRVYALLISSGVKKESLLDMNRCAWLNLKLKDITKQNQLLQLSHQYLDLKRIFEEKISIQYQKITQGDELAPGILKVVKVYLAVKRQIQPGDKMAGRHGNKGVISKINPVEDMPYDEYGVPVDIVLNPLGVPSRMNIGQILETHLGMAAKGIGDQINLMLQQHQEINKLRKFIQKAYKLGVGVRQNIDLNTFSDLEVLRLAKNLKSGMPIATPVFDGATEQEIKELLQLSGLPTSGQITLFDGCTGEVFERKVTVGYMYMLKLNHLVDDKMHARSTGSYSLVTQQPLGGKAQFGGQRFGEMEVWALEAYGASYTLQEMLTVKSDDVNGRTKMYKNIIDGNHMMEPGMPESFNVLLKEIRSLAINIELDD.

Belongs to the RNA polymerase beta chain family. As to quaternary structure, the RNAP catalytic core consists of 2 alpha, 1 beta, 1 beta' and 1 omega subunit. When a sigma factor is associated with the core the holoenzyme is formed, which can initiate transcription.

It catalyses the reaction RNA(n) + a ribonucleoside 5'-triphosphate = RNA(n+1) + diphosphate. DNA-dependent RNA polymerase catalyzes the transcription of DNA into RNA using the four ribonucleoside triphosphates as substrates. This Blochmanniella floridana protein is DNA-directed RNA polymerase subunit beta.